We begin with the raw amino-acid sequence, 648 residues long: Beta-glucuronidase (648 aa).

The N-terminal stretch at 1-22 is a signal peptide; that stretch reads MSLKWSACWVALGQLLCSCALA. 2 N-linked (GlcNAc...) asparagine glycosylation sites follow: N172 and N416. The active-site Proton donor is E447. The N-linked (GlcNAc...) asparagine glycan is linked to N627.

Belongs to the glycosyl hydrolase 2 family. In terms of assembly, homotetramer.

It localises to the lysosome. The protein localises to the endoplasmic reticulum. It carries out the reaction a beta-D-glucuronoside + H2O = D-glucuronate + an alcohol. With respect to regulation, inhibited by L-aspartic acid. In terms of biological role, plays an important role in the degradation of dermatan and keratan sulfates. In Mus musculus (Mouse), this protein is Beta-glucuronidase (Gusb).